The following is a 331-amino-acid chain: MVSYKEAGVNIEEGYKSVDLIKKYASKTFTKGVLNNLGSFAGMFELPKYKNPVLVSGTDGVGTKLDIAFRMKKYNTVGIDCVAMCINDILCHGAKPLFFLDYIACGKLESEIAAQLVEGVSNGCIQSECALIGGETAEMPGFYRDGEYDIAGFAVGIAEKDEIIDGSKIEDGDILIGIASSGPHSNGYSLIRKLVEDLHKDFEGNKIGNTLLTPTKIYVKPVMKLLEKYNIKGMAHVTGGGFYENIPRMFKEDFTAVINKKSYPLPNIFSHLMSLGIEEDHMYNTFNMGIGFVLCVNEKDGENIIKDLIEMGEKGYKIGYVKKGNKSVELI.

It belongs to the AIR synthase family.

It localises to the cytoplasm. The enzyme catalyses 2-formamido-N(1)-(5-O-phospho-beta-D-ribosyl)acetamidine + ATP = 5-amino-1-(5-phospho-beta-D-ribosyl)imidazole + ADP + phosphate + H(+). It functions in the pathway purine metabolism; IMP biosynthesis via de novo pathway; 5-amino-1-(5-phospho-D-ribosyl)imidazole from N(2)-formyl-N(1)-(5-phospho-D-ribosyl)glycinamide: step 2/2. In Clostridium botulinum (strain Langeland / NCTC 10281 / Type F), this protein is Phosphoribosylformylglycinamidine cyclo-ligase.